Here is a 119-residue protein sequence, read N- to C-terminus: Large ribosomal subunit protein bL17 (119 aa).

This sequence belongs to the bacterial ribosomal protein bL17 family. As to quaternary structure, part of the 50S ribosomal subunit. Contacts protein L32.

The polypeptide is Large ribosomal subunit protein bL17 (Ureaplasma parvum serovar 3 (strain ATCC 27815 / 27 / NCTC 11736)).